The primary structure comprises 122 residues: Large ribosomal subunit protein eL22B (122 aa).

It belongs to the eukaryotic ribosomal protein eL22 family. As to quaternary structure, component of the large ribosomal subunit (LSU). Mature yeast ribosomes consist of a small (40S) and a large (60S) subunit. The 40S small subunit contains 1 molecule of ribosomal RNA (18S rRNA) and 33 different proteins (encoded by 57 genes). The large 60S subunit contains 3 rRNA molecules (25S, 5.8S and 5S rRNA) and 46 different proteins (encoded by 81 genes).

The protein resides in the cytoplasm. In terms of biological role, component of the ribosome, a large ribonucleoprotein complex responsible for the synthesis of proteins in the cell. The small ribosomal subunit (SSU) binds messenger RNAs (mRNAs) and translates the encoded message by selecting cognate aminoacyl-transfer RNA (tRNA) molecules. The large subunit (LSU) contains the ribosomal catalytic site termed the peptidyl transferase center (PTC), which catalyzes the formation of peptide bonds, thereby polymerizing the amino acids delivered by tRNAs into a polypeptide chain. The nascent polypeptides leave the ribosome through a tunnel in the LSU and interact with protein factors that function in enzymatic processing, targeting, and the membrane insertion of nascent chains at the exit of the ribosomal tunnel. This chain is Large ribosomal subunit protein eL22B, found in Saccharomyces cerevisiae (strain ATCC 204508 / S288c) (Baker's yeast).